A 293-amino-acid polypeptide reads, in one-letter code: Diaminopimelate epimerase (293 aa).

Substrate is bound by residues N17, Q47, and N67. The Proton donor role is filled by C76. Substrate-binding positions include 77 to 78 (GN), N164, N197, and 215 to 216 (ER). C224 serves as the catalytic Proton acceptor. 225–226 (GS) is a binding site for substrate.

The protein belongs to the diaminopimelate epimerase family. As to quaternary structure, homodimer.

It is found in the cytoplasm. The enzyme catalyses (2S,6S)-2,6-diaminopimelate = meso-2,6-diaminopimelate. The protein operates within amino-acid biosynthesis; L-lysine biosynthesis via DAP pathway; DL-2,6-diaminopimelate from LL-2,6-diaminopimelate: step 1/1. In terms of biological role, catalyzes the stereoinversion of LL-2,6-diaminopimelate (L,L-DAP) to meso-diaminopimelate (meso-DAP), a precursor of L-lysine and an essential component of the bacterial peptidoglycan. In Rhodopseudomonas palustris (strain HaA2), this protein is Diaminopimelate epimerase.